Here is a 525-residue protein sequence, read N- to C-terminus: Bifunctional purine biosynthesis protein PurH (525 aa).

Residues 1–149 form the MGS-like domain; the sequence is MSDPVIKRAL…KNNESVTVVT (149 aa).

This sequence belongs to the PurH family.

The catalysed reaction is (6R)-10-formyltetrahydrofolate + 5-amino-1-(5-phospho-beta-D-ribosyl)imidazole-4-carboxamide = 5-formamido-1-(5-phospho-D-ribosyl)imidazole-4-carboxamide + (6S)-5,6,7,8-tetrahydrofolate. It carries out the reaction IMP + H2O = 5-formamido-1-(5-phospho-D-ribosyl)imidazole-4-carboxamide. The protein operates within purine metabolism; IMP biosynthesis via de novo pathway; 5-formamido-1-(5-phospho-D-ribosyl)imidazole-4-carboxamide from 5-amino-1-(5-phospho-D-ribosyl)imidazole-4-carboxamide (10-formyl THF route): step 1/1. Its pathway is purine metabolism; IMP biosynthesis via de novo pathway; IMP from 5-formamido-1-(5-phospho-D-ribosyl)imidazole-4-carboxamide: step 1/1. The protein is Bifunctional purine biosynthesis protein PurH of Prosthecochloris aestuarii (strain DSM 271 / SK 413).